A 1440-amino-acid chain; its full sequence is Gag-Pro-Pol polyprotein (1440 aa).

Gly-2 carries N-myristoyl glycine; by host lipidation. The interval Glu-95–Ala-116 is disordered. The short motif at Pro-98–Pro-101 is the PTAP/PSAP motif element. The PPXY motif motif lies at Pro-109–Tyr-112. 2 consecutive CCHC-type zinc fingers follow at residues Gln-349 to Gln-366 and Gly-372 to Gln-389. The region spanning Val-457–Ala-535 is the Peptidase A2 domain. Residue Asp-462 is the For protease activity; shared with dimeric partner of the active site. The region spanning Leu-593–Ile-783 is the Reverse transcriptase domain. Residues Asp-659, Asp-734, Asp-735, Asp-1019, Glu-1052, Asp-1074, Asp-1135, Asp-1208, and Asp-1265 each coordinate Mg(2+). The region spanning Ile-1010–Leu-1143 is the RNase H type-1 domain. The region spanning Arg-1197 to Pro-1366 is the Integrase catalytic domain. Positions Lys-1371–Cys-1420 form a DNA-binding region, integrase-type.

Interacts with human TSG101. This interaction is essential for budding and release of viral particles. Mg(2+) serves as cofactor. Post-translationally, specific enzymatic cleavages by the viral protease yield mature proteins. The polyprotein is cleaved during and after budding, this process is termed maturation. The protease is autoproteolytically processed at its N- and C-termini.

It is found in the virion. The enzyme catalyses Endonucleolytic cleavage to 5'-phosphomonoester.. It carries out the reaction DNA(n) + a 2'-deoxyribonucleoside 5'-triphosphate = DNA(n+1) + diphosphate. Matrix protein p19 targets Gag, Gag-Pro and Gag-Pro-Pol polyproteins to the plasma membrane via a multipartite membrane binding signal, that includes its myristoylated N-terminus. Also mediates nuclear localization of the preintegration complex. In terms of biological role, capsid protein p24 forms the conical core of the virus that encapsulates the genomic RNA-nucleocapsid complex. Functionally, nucleocapsid protein p15 is involved in the packaging and encapsidation of two copies of the genome. Its function is as follows. The aspartyl protease mediates proteolytic cleavages of Gag, Gag-Pro and Gag-Pro-Pol polyproteins during or shortly after the release of the virion from the plasma membrane. Cleavages take place as an ordered, step-wise cascade to yield mature proteins. This process is called maturation. Displays maximal activity during the budding process just prior to particle release from the cell. Hydrolyzes host EIF4GI in order to shut off the capped cellular mRNA translation. The resulting inhibition of cellular protein synthesis serves to ensure maximal viral gene expression and to evade host immune response. Reverse transcriptase (RT) is a multifunctional enzyme that converts the viral RNA genome into dsDNA in the cytoplasm, shortly after virus entry into the cell. This enzyme displays a DNA polymerase activity that can copy either DNA or RNA templates, and a ribonuclease H (RNase H) activity that cleaves the RNA strand of RNA-DNA heteroduplexes in a partially processive 3' to 5'-endonucleasic mode. Conversion of viral genomic RNA into dsDNA requires many steps. A tRNA-Pro binds to the primer-binding site (PBS) situated at the 5'-end of the viral RNA. RT uses the 3' end of the tRNA primer to perform a short round of RNA-dependent minus-strand DNA synthesis. The reading proceeds through the U5 region and ends after the repeated (R) region which is present at both ends of viral RNA. The portion of the RNA-DNA heteroduplex is digested by the RNase H, resulting in a ssDNA product attached to the tRNA primer. This ssDNA/tRNA hybridizes with the identical R region situated at the 3' end of viral RNA. This template exchange, known as minus-strand DNA strong stop transfer, can be either intra- or intermolecular. RT uses the 3' end of this newly synthesized short ssDNA to perform the RNA-dependent minus-strand DNA synthesis of the whole template. RNase H digests the RNA template except for a polypurine tract (PPT) situated at the 5' end of the genome. It is not clear if both polymerase and RNase H activities are simultaneous. RNase H probably can proceed both in a polymerase-dependent (RNA cut into small fragments by the same RT performing DNA synthesis) and a polymerase-independent mode (cleavage of remaining RNA fragments by free RTs). Secondly, RT performs DNA-directed plus-strand DNA synthesis using the PPT that has not been removed by RNase H as primer. PPT and tRNA primers are then removed by RNase H. The 3' and 5' ssDNA PBS regions hybridize to form a circular dsDNA intermediate. Strand displacement synthesis by RT to the PBS and PPT ends produces a blunt ended, linear dsDNA copy of the viral genome that includes long terminal repeats (LTRs) at both ends. In terms of biological role, integrase catalyzes viral DNA integration into the host chromosome, by performing a series of DNA cutting and joining reactions. This enzyme activity takes place after virion entry into a cell and reverse transcription of the RNA genome in dsDNA. The first step in the integration process is 3' processing. This step requires a complex comprising the viral genome, matrix protein, and integrase. This complex is called the pre-integration complex (PIC). The integrase protein removes 2 nucleotides from each 3' end of the viral DNA, leaving recessed dinucleotides OH's at the 3' ends. In the second step, the PIC access cell chromosomes during cell division. The third step, termed strand transfer, the integrase protein joins the previously processed 3' ends to the 5'-ends of strands of target cellular DNA at the site of integration. The 5'-ends are produced by integrase-catalyzed staggered cuts, 5 bp apart. A Y-shaped, gapped, recombination intermediate results, with the 5'-ends of the viral DNA strands and the 3' ends of target DNA strands remaining unjoined, flanking a gap of 5 bp. The last step is viral DNA integration into host chromosome. This involves host DNA repair synthesis in which the 5 bp gaps between the unjoined strands (see above) are filled in and then ligated. This chain is Gag-Pro-Pol polyprotein (gag-pro-pol), found in Human T-cell leukemia virus 3 (strain 2026ND) (HTLV-3).